Consider the following 156-residue polypeptide: Ribosomal RNA large subunit methyltransferase H (156 aa).

S-adenosyl-L-methionine is bound by residues Leu-73, Gly-104, and 123 to 128 (LSPLTL).

The protein belongs to the RNA methyltransferase RlmH family. As to quaternary structure, homodimer.

Its subcellular location is the cytoplasm. It catalyses the reaction pseudouridine(1915) in 23S rRNA + S-adenosyl-L-methionine = N(3)-methylpseudouridine(1915) in 23S rRNA + S-adenosyl-L-homocysteine + H(+). Its function is as follows. Specifically methylates the pseudouridine at position 1915 (m3Psi1915) in 23S rRNA. The sequence is that of Ribosomal RNA large subunit methyltransferase H from Marinobacter nauticus (strain ATCC 700491 / DSM 11845 / VT8) (Marinobacter aquaeolei).